The sequence spans 20 residues: Pregnancy-associated glycoprotein 67A (20 aa).

Residues Asn-4 and Asn-20 are each glycosylated (N-linked (GlcNAc...) asparagine).

It belongs to the peptidase A1 family. In terms of tissue distribution, chorionic epithelium (trophectoderm) and placental cotyledons.

Its subcellular location is the secreted. It localises to the extracellular space. The sequence is that of Pregnancy-associated glycoprotein 67A from Bison bonasus (European bison).